The primary structure comprises 110 residues: UPF0251 protein PYRAB12660 (110 aa).

Belongs to the UPF0251 family.

The protein is UPF0251 protein PYRAB12660 of Pyrococcus abyssi (strain GE5 / Orsay).